The chain runs to 251 residues: Ubiquinone/menaquinone biosynthesis C-methyltransferase UbiE (251 aa).

S-adenosyl-L-methionine is bound by residues T74, D95, 123–124 (NA), and S140.

This sequence belongs to the class I-like SAM-binding methyltransferase superfamily. MenG/UbiE family.

It catalyses the reaction a 2-demethylmenaquinol + S-adenosyl-L-methionine = a menaquinol + S-adenosyl-L-homocysteine + H(+). It carries out the reaction a 2-methoxy-6-(all-trans-polyprenyl)benzene-1,4-diol + S-adenosyl-L-methionine = a 5-methoxy-2-methyl-3-(all-trans-polyprenyl)benzene-1,4-diol + S-adenosyl-L-homocysteine + H(+). The protein operates within quinol/quinone metabolism; menaquinone biosynthesis; menaquinol from 1,4-dihydroxy-2-naphthoate: step 2/2. It participates in cofactor biosynthesis; ubiquinone biosynthesis. Methyltransferase required for the conversion of demethylmenaquinol (DMKH2) to menaquinol (MKH2) and the conversion of 2-polyprenyl-6-methoxy-1,4-benzoquinol (DDMQH2) to 2-polyprenyl-3-methyl-6-methoxy-1,4-benzoquinol (DMQH2). The polypeptide is Ubiquinone/menaquinone biosynthesis C-methyltransferase UbiE (Salmonella arizonae (strain ATCC BAA-731 / CDC346-86 / RSK2980)).